The chain runs to 1489 residues: FERM domain-containing protein C (1489 aa).

2 stretches are compositionally biased toward polar residues: residues 59-79 (DTES…NFNS) and 103-118 (NSPL…STSI). Disordered regions lie at residues 59-86 (DTES…HQHL), 103-197 (NSPL…PSTL), 252-271 (NSVQ…NNNN), and 277-312 (EQQQ…TPDS). Positions 131–153 (SSSSSSSDGDSNSSSDSSDNSSE) are enriched in low complexity. Residues 163–172 (HLHLHRHHRK) show a composition bias toward basic residues. Positions 181 to 195 (FESSSESSEQYGSPS) are enriched in low complexity. The stretch at 202–289 (ALKLEKIMQI…QEKQQQQQQH (88 aa)) forms a coiled coil. Residues 277 to 287 (EQQQEKQQQQQ) show a composition bias toward low complexity. Residues 303-312 (RSVSISTPDS) are compositionally biased toward polar residues. The stretch at 356 to 383 (IKVSKVLEEEMQLQQEFEKQEQLRHSAR) forms a coiled coil. Disordered regions lie at residues 396 to 435 (NLQD…ENQN), 459 to 479 (VITP…KILT), and 508 to 569 (EDPL…TTTT). Low complexity predominate over residues 421-435 (ENVSNDNSSDNENQN). Over residues 545-555 (TASSSSSPTLQ) the composition is skewed to polar residues. Positions 556–569 (ATKTTTTTTTTTTT) are enriched in low complexity. Residues 637–934 (ILVHISLVDQ…GYKYFIQHDE (298 aa)) enclose the FERM domain. LRR repeat units follow at residues 1017 to 1040 (KVEL…LKDT), 1053 to 1075 (ENLN…AFEP), 1087 to 1110 (HLNL…IEKY), 1111 to 1133 (PNIE…VILR), 1167 to 1191 (NKTI…IFEG), 1196 to 1219 (SLSL…KFIK), 1254 to 1278 (SCHI…VIKG), 1282 to 1306 (NQTI…LCQS), 1339 to 1362 (NKTI…AIGT), 1367 to 1391 (NETL…ILNG), 1395 to 1418 (NSTI…SLAN), 1428 to 1450 (VITL…QLST), and 1451 to 1474 (NIPI…IKNA).

The chain is FERM domain-containing protein C (frmC) from Dictyostelium discoideum (Social amoeba).